Reading from the N-terminus, the 518-residue chain is Calcium and calcium/calmodulin-dependent serine/threonine-protein kinase (518 aa).

In terms of domain architecture, Protein kinase spans 13 to 300; it reads YEISEILGRG…AQELLSHPWV (288 aa). ATP is bound by residues 19–27 and Lys44; that span reads LGRGGFSVV. The active-site Proton acceptor is the Asp165. Phosphothreonine is present on Thr265. Residues 323 to 336 are calmodulin-binding; the sequence is ARRKLRAAAIASVW. The stretch at 344–365 forms a coiled coil; sequence TKKLRSLVGTYDLKEEEIESLR. EF-hand domains follow at residues 394–429, 430–465, and 472–507; these read SLIP…LKNS, KGDD…LPEE, and TEPG…DSSL. Ca(2+) is bound by residues Asp407, Asn409, Asp411, Thr413, Glu418, Asp443, Asp445, Ser447, Cys449, Glu454, Asp485, Asn487, Asp489, Lys491, and Glu496.

It belongs to the protein kinase superfamily. CAMK Ser/Thr protein kinase family. CaMK subfamily. Interacts with IPD3. Interacts with CIP73. Post-translationally, autophosphorylation stimulated by calcium. Occurs probably by an intermolecular mechanism. As to expression, mainly expressed in roots and nodules. Detected in leaves, stems and cotyledons.

Its subcellular location is the nucleus. It carries out the reaction L-seryl-[protein] + ATP = O-phospho-L-seryl-[protein] + ADP + H(+). The catalysed reaction is L-threonyl-[protein] + ATP = O-phospho-L-threonyl-[protein] + ADP + H(+). With respect to regulation, activated by calcium/calmodulin binding after calcium-induced autophosphorylation. In terms of biological role, calcium- and calmodulin-dependent protein kinase necessary and sufficient for dedifferentiation of root cortical cells into nodule initials. Not required for calcium spiking. Acts as central regulator of the nodule organogenesis program. Required for root hair curling and infection thread (IT) formation upon rhizobial infection, and arbuscule formation during arbuscular mycorrhiza (AM) fungal infection. Phosphorylates the downstream target IPD3, a protein required for root infection by symbiotic rhizobia and AM fungi. Phosphorylates the downstream target CIP73, a protein required for root nodule organogenesis. Mediates the phosphorylation of leghemoglobins (e.g. LB1) to modulate their oxygen O(2) affinity, thus regulating the diffusion of oxygen to the bacteroids in nodules. The polypeptide is Calcium and calcium/calmodulin-dependent serine/threonine-protein kinase (Lotus japonicus (Lotus corniculatus var. japonicus)).